A 505-amino-acid polypeptide reads, in one-letter code: Sodium/sialic acid symporter NanT (505 aa).

A run of 5 helical transmembrane segments spans residues 9–29, 45–65, 80–100, 128–148, and 155–175; these read LNYIALFAYLGAIMAVGVYFA, IPGWAAGFSVFATTLSSITFM, IGQYVAIAILPIVFWFYIPFF, FMLFHIGRIAIVTYLTALALM, and PLMIVFLIGVLCIIYTFLGGI. Ala-56 contributes to the Na(+) binding site. Thr-58 provides a ligand contact to N-acetyl-alpha-neuraminate. Leu-59 is a Na(+) binding site. Positions 60, 63, 82, and 135 each coordinate N-acetyl-alpha-neuraminate. Position 182 (Asp-182) interacts with Na(+). 4 consecutive transmembrane segments (helical) span residues 183-203, 227-247, 280-300, and 318-338; these read VIQGVMLSVAAILIFVVICFN, FSWSWTDSTIPVLMIGFFFAS, LVACVPIFFFAVGSALFAYYT, and FYVISQMPVGVAGLIIAAIFA. Positions 339, 342, 343, 345, and 346 each coordinate Na(+). The next 4 membrane-spanning stretches (helical) occupy residues 378–398, 406–426, 435–455, and 457–477; these read TLTVVAGLLGVVASTYLIMSN, FNSLLGLMGGPMTGLFMLGIF, ALLGVVASIATVLWVRSATDL, and FFFYGVIGTLMVVIVGYLTAP.

This sequence belongs to the sodium:solute symporter (SSF) (TC 2.A.21) family.

The protein resides in the cell inner membrane. The catalysed reaction is N-acetyl-alpha-neuraminate(out) + 2 Na(+)(out) = N-acetyl-alpha-neuraminate(in) + 2 Na(+)(in). Symporter that uses the Na(+) gradient as the driving force for the uptake of the sialic acid N-acetylneuraminic acid (Neu5Ac). Might play a role in persistence after colonization. The sequence is that of Sodium/sialic acid symporter NanT from Aliivibrio fischeri (strain ATCC 700601 / ES114) (Vibrio fischeri).